Here is a 357-residue protein sequence, read N- to C-terminus: NADH-quinone oxidoreductase subunit H (357 aa).

A run of 8 helical transmembrane segments spans residues 20–40 (WLVVWTIIKIVIIAVPIILCV), 92–112 (ILFIVAPVVTLMPALAAWAVV), 127–147 (LLYVMAITSIGVYGVIVAGWA), 165–185 (VSYELAISFVLVTVLLVSGSL), 206–226 (FLSWNWLPLLPLFVIYVISAV), 268–288 (ILLSAMASIMFLGGWMSPIDI), 294–314 (IPGWIWLGIKTFFVVSLFIWF), and 329–349 (LGWKIFIPLTGVWLVVVAIWM).

This sequence belongs to the complex I subunit 1 family. In terms of assembly, NDH-1 is composed of 14 different subunits. Subunits NuoA, H, J, K, L, M, N constitute the membrane sector of the complex.

The protein localises to the cell inner membrane. It catalyses the reaction a quinone + NADH + 5 H(+)(in) = a quinol + NAD(+) + 4 H(+)(out). NDH-1 shuttles electrons from NADH, via FMN and iron-sulfur (Fe-S) centers, to quinones in the respiratory chain. The immediate electron acceptor for the enzyme in this species is believed to be ubiquinone. Couples the redox reaction to proton translocation (for every two electrons transferred, four hydrogen ions are translocated across the cytoplasmic membrane), and thus conserves the redox energy in a proton gradient. This subunit may bind ubiquinone. The polypeptide is NADH-quinone oxidoreductase subunit H (Bordetella avium (strain 197N)).